The chain runs to 159 residues: C-type lectin 1 (159 aa).

The first 23 residues, 1-23 (MGRFIFISFGLLVVFFFLSGAKG), serve as a signal peptide directing secretion. 4 disulfide bridges follow: Cys26/Cys37, Cys54/Cys155, Cys61/Cys157, and Cys130/Cys147. Positions 33-156 (MYGLCYKIFD…CKVKNAFLCQ (124 aa)) constitute a C-type lectin domain. Asn118 carries N-linked (GlcNAc...) asparagine glycosylation. A Sugar-binding motif is present at residues 119–121 (LTD). Ca(2+) is bound by residues Asp121, Asp127, and Asn143.

The protein belongs to the true venom lectin family. As to quaternary structure, homodimer; disulfide-linked. Expressed by the venom gland.

Its subcellular location is the secreted. Functionally, lectin which recognizes specific carbohydrate structures and agglutinates a variety of animal cells by binding to cell-surface glycoproteins and glycolipids. May be a calcium-dependent lectin. The chain is C-type lectin 1 from Bitis gabonica (Gaboon adder).